The following is a 116-amino-acid chain: Prefoldin subunit beta (116 aa).

The protein belongs to the prefoldin subunit beta family. Heterohexamer of two alpha and four beta subunits.

The protein resides in the cytoplasm. In terms of biological role, molecular chaperone capable of stabilizing a range of proteins. Seems to fulfill an ATP-independent, HSP70-like function in archaeal de novo protein folding. This chain is Prefoldin subunit beta (pfdB), found in Archaeoglobus fulgidus (strain ATCC 49558 / DSM 4304 / JCM 9628 / NBRC 100126 / VC-16).